Here is a 129-residue protein sequence, read N- to C-terminus: uncharacterized protein (129 aa).

Positions 1–17 (MCPECFFLMLFFCGYRA) are cleaved as a signal peptide. Over residues 26–36 (SSSSSSSFRSS) the composition is skewed to low complexity. Residues 26-76 (SSSSSSSFRSSPAYGFSGRPPGGAGCRERSQRSCLRPGGLPSLTRNPGLQR) are disordered.

This is an uncharacterized protein from Escherichia coli O157:H7.